We begin with the raw amino-acid sequence, 458 residues long: Retinoic acid receptor alpha (458 aa).

Positions 1-86 (MASNGGSCPS…PPPLPRIYKP (86 aa)) are modulating. The span at 54–68 (TPSPATIETQSTSSE) shows a compositional bias: polar residues. The interval 54 to 76 (TPSPATIETQSTSSEEIVPSPPS) is disordered. 2 consecutive NR C4-type zinc fingers follow at residues 87–107 (CFVCQDKSSGYHYGVSACEGC) and 123–147 (CHRDKTCIINKVTRNRCQYCRLQKC). The segment at residues 87–152 (CFVCQDKSSG…RLQKCFEVGM (66 aa)) is a DNA-binding region (nuclear receptor). A hinge region spans residues 153-182 (SKESVRNDRNKKKKQEAPKQECTESYIITP). The 235-residue stretch at 183 to 417 (EVEDLVEKVR…PLIQEMLENS (235 aa)) folds into the NR LBD domain. Residues 408–416 (PLIQEMLEN) carry the 9aaTAD motif. The interval 417-458 (SEGLDSLTGQPPRASSLAPPPGSCSPSLSPSSNRSSPTSHSP) is disordered. Low complexity predominate over residues 440–458 (CSPSLSPSSNRSSPTSHSP).

It belongs to the nuclear hormone receptor family. NR1 subfamily. In terms of assembly, heterodimer; with an rxr molecule. Binds DNA preferentially as a rar/rxr heterodimer. In terms of tissue distribution, expressed in forelimb, in the distal forelimb blastema, kidney, liver and hindlimb blastemal mesenchymal cells.

The protein localises to the nucleus. Functionally, receptor for retinoic acid. Retinoic acid receptors bind as heterodimers to their target response elements in response to their ligands, all-trans or 9-cis retinoic acid, and regulate gene expression in various biological processes. The rar/rxr heterodimers bind to the retinoic acid response elements (RARE) composed of tandem 5'-AGGTCA-3' sites known as DR1-DR5. Retinoic acid signaling appears to be involved in specifying proximal-distal axis in limb regeneration. This is Retinoic acid receptor alpha (RARA) from Notophthalmus viridescens (Eastern newt).